The sequence spans 379 residues: Succinate--CoA ligase [ADP-forming] subunit beta (379 aa).

An ATP-grasp domain is found at 9–235; the sequence is KEIAKNNGIP…GRELSEMEAI (227 aa). ATP-binding residues include Lys45, Glu91, Ile94, and Glu99. Mg(2+)-binding residues include Asn191 and Asp205. Residues Asn255 and 312–314 each bind substrate; that span reads GIT.

The protein belongs to the succinate/malate CoA ligase beta subunit family. As to quaternary structure, heterotetramer of two alpha and two beta subunits. Mg(2+) serves as cofactor.

The enzyme catalyses succinate + ATP + CoA = succinyl-CoA + ADP + phosphate. It carries out the reaction GTP + succinate + CoA = succinyl-CoA + GDP + phosphate. It participates in carbohydrate metabolism; tricarboxylic acid cycle; succinate from succinyl-CoA (ligase route): step 1/1. Its function is as follows. Succinyl-CoA synthetase functions in the citric acid cycle (TCA), coupling the hydrolysis of succinyl-CoA to the synthesis of either ATP or GTP and thus represents the only step of substrate-level phosphorylation in the TCA. The beta subunit provides nucleotide specificity of the enzyme and binds the substrate succinate, while the binding sites for coenzyme A and phosphate are found in the alpha subunit. The polypeptide is Succinate--CoA ligase [ADP-forming] subunit beta (Staphylothermus marinus (strain ATCC 43588 / DSM 3639 / JCM 9404 / F1)).